The primary structure comprises 379 residues: Homoserine O-acetyltransferase (379 aa).

In terms of domain architecture, AB hydrolase-1 spans 54 to 332 (NAILVCHALS…PYQSEEIVKS (279 aa)). Ser159 (nucleophile) is an active-site residue. Substrate is bound at residue Arg228. Catalysis depends on residues Asp318 and His352. Substrate is bound at residue Asp353.

Belongs to the AB hydrolase superfamily. MetX family. As to quaternary structure, homodimer.

The protein resides in the cytoplasm. It carries out the reaction L-homoserine + acetyl-CoA = O-acetyl-L-homoserine + CoA. It participates in amino-acid biosynthesis; L-methionine biosynthesis via de novo pathway; O-acetyl-L-homoserine from L-homoserine: step 1/1. Functionally, transfers an acetyl group from acetyl-CoA to L-homoserine, forming acetyl-L-homoserine. The chain is Homoserine O-acetyltransferase from Leptospira meyeri.